Here is a 308-residue protein sequence, read N- to C-terminus: Sulfate adenylyltransferase subunit 2 (308 aa).

A disordered region spans residues 286–308 (RQGRIIDHDGSASMEKKKQEGYF).

It belongs to the PAPS reductase family. CysD subfamily. As to quaternary structure, heterodimer composed of CysD, the smaller subunit, and CysN.

It carries out the reaction sulfate + ATP + H(+) = adenosine 5'-phosphosulfate + diphosphate. Its pathway is sulfur metabolism; hydrogen sulfide biosynthesis; sulfite from sulfate: step 1/3. With CysN forms the ATP sulfurylase (ATPS) that catalyzes the adenylation of sulfate producing adenosine 5'-phosphosulfate (APS) and diphosphate, the first enzymatic step in sulfur assimilation pathway. APS synthesis involves the formation of a high-energy phosphoric-sulfuric acid anhydride bond driven by GTP hydrolysis by CysN coupled to ATP hydrolysis by CysD. This is Sulfate adenylyltransferase subunit 2 from Nocardia farcinica (strain IFM 10152).